The sequence spans 79 residues: Small ribosomal subunit protein bS16cz (79 aa).

This sequence belongs to the bacterial ribosomal protein bS16 family.

It is found in the plastid. It localises to the chloroplast. The protein is Small ribosomal subunit protein bS16cz of Arabidopsis thaliana (Mouse-ear cress).